The chain runs to 415 residues: G-protein coupled receptor daf-38 (415 aa).

Positions 1–19 are enriched in low complexity; that stretch reads MLLPSNLTTSTLMTSSSES. A disordered region spans residues 1-25; the sequence is MLLPSNLTTSTLMTSSSESYDADNP. The Extracellular portion of the chain corresponds to 1-35; sequence MLLPSNLTTSTLMTSSSESYDADNPGLPPEPILSD. The chain crosses the membrane as a helical span at residues 36–56; it reads YVEMFTLVLNFIVGAPLNLAA. The Cytoplasmic portion of the chain corresponds to 57 to 75; the sequence is YTQLSERPTSTRLDLLKRS. Residues 76–96 form a helical membrane-spanning segment; the sequence is LNYSDLLVLFIYVPSRACWLL. Over 97-108 the chain is Extracellular; sequence TYDWRGGDALCK. Residues Cys107 and Cys187 are joined by a disulfide bond. A helical membrane pass occupies residues 109 to 129; that stretch reads IVKMFHTFAFQSSSNVIVCIA. Topologically, residues 130–152 are cytoplasmic; that stretch reads VDRLLSVLSPSHHSPNKALKRTK. Residues 153-173 form a helical membrane-spanning segment; that stretch reads MMLIVAWIVALVISCPQLFIW. Residues 174–222 lie on the Extracellular side of the membrane; the sequence is KAYLALPEYNWSQCLQIWEIARMEKFNKPQVVPEFDAEFWYSILHISLV. Residues 223–243 form a helical membrane-spanning segment; sequence FWIPCIIIMLSYIIVISWVWI. Over 244 to 345 the chain is Cytoplasmic; sequence NSRPSIRHTS…NLNRSRALRV (102 aa). The chain crosses the membrane as a helical span at residues 346-366; that stretch reads SLLLVVAYIICWLPYNLISLI. At 367–382 the chain is on the extracellular side; that stretch reads QFLDRDFFSSYLKHVH. Residues 383 to 403 form a helical membrane-spanning segment; it reads FCQQLIIFNSVVNPWLYGFFG. The Cytoplasmic segment spans residues 404-415; that stretch reads PRRPSTTGAGRH.

This sequence belongs to the G-protein coupled receptor 1 family. In terms of assembly, heterodimer; with daf-37. In terms of tissue distribution, expressed in the ASI and ASK chemosensory neurons and in the IL-2 interneurons, but weakly expressed in other head neurons in hermaphrodites.

It is found in the cell membrane. Its function is as follows. G-protein coupled receptor (GPCR) that forms a heterodimer with daf-37 to control dauer formation and behavior. Required for the response to dauer inducing pheromones such as the ascarosides ascr#2, ascr#3 and ascr#5. This is G-protein coupled receptor daf-38 from Caenorhabditis elegans.